The following is a 279-amino-acid chain: Ribonuclease T2 protein rnst-2 (279 aa).

An N-terminal signal peptide occupies residues 1–17 (MKLLLLLCISCIPLAYS). Cys37 and Cys48 form a disulfide bridge. The active site involves His60. Asn68 carries an N-linked (GlcNAc...) asparagine glycan. Active-site residues include Glu114 and His118. A disulfide bridge links Cys200 with Cys210.

The protein belongs to the RNase T2 family. Expressed in the pharynx, hypodermis, muscle cells, sheath cells, intestinal cells, the vulva and tail regions.

The protein localises to the lysosome. The catalysed reaction is a ribonucleotidyl-ribonucleotide-RNA + H2O = a 3'-end 3'-phospho-ribonucleotide-RNA + a 5'-end dephospho-ribonucleoside-RNA + H(+). In terms of biological role, probable endoribonuclease involved in the autophagy-mediated degradation of ribosomal RNA and ribosomal proteins in lysosomes. This Caenorhabditis elegans protein is Ribonuclease T2 protein rnst-2.